Consider the following 645-residue polypeptide: Zinc finger and SCAN domain-containing protein 2 (645 aa).

Disordered regions lie at residues 1-25, 37-75, and 193-230; these read MMAA…EEDR, DDSW…GPQG, and EMPE…HGEV. Residues 59–132 enclose the SCAN box domain; that stretch reads SAGKGSPQEE…ALVEDLTQTL (74 aa). The span at 199-214 shows a compositional bias: basic and acidic residues; that stretch reads SAQHSDGESDFERDAG. 14 C2H2-type zinc fingers span residues 253 to 275, 281 to 303, 309 to 331, 337 to 359, 365 to 387, 393 to 415, 421 to 443, 449 to 471, 477 to 499, 505 to 527, 533 to 555, 561 to 583, 589 to 611, and 617 to 639; these read YECP…ERTH, YKCD…QTTH, YKCR…QRIH, FQCA…QRTH, YSCP…QGIH, YECK…QRIH, YKCT…RRTH, YQCS…RRTH, YKCG…QGMH, YECL…QRIH, YKCS…QQTH, YKCL…QRAH, YRCP…QRIH, and YKCP…QRTH.

It belongs to the krueppel C2H2-type zinc-finger protein family.

It is found in the nucleus. Functionally, may be involved in transcriptional regulation during the post-meiotic stages of spermatogenesis. This Pongo abelii (Sumatran orangutan) protein is Zinc finger and SCAN domain-containing protein 2 (ZSCAN2).